Reading from the N-terminus, the 384-residue chain is GDSL esterase/lipase At1g71691 (384 aa).

The N-terminal stretch at M1–G27 is a signal peptide. The Nucleophile role is filled by S62. Residues D348 and H351 contribute to the active site.

This sequence belongs to the 'GDSL' lipolytic enzyme family.

The protein localises to the secreted. The polypeptide is GDSL esterase/lipase At1g71691 (Arabidopsis thaliana (Mouse-ear cress)).